The primary structure comprises 203 residues: Small ribosomal subunit protein uS4 (203 aa).

The S4 RNA-binding domain occupies 93 to 156 (RRLDNVVYRL…IKVPAILEAV (64 aa)).

Belongs to the universal ribosomal protein uS4 family. Part of the 30S ribosomal subunit. Contacts protein S5. The interaction surface between S4 and S5 is involved in control of translational fidelity.

Functionally, one of the primary rRNA binding proteins, it binds directly to 16S rRNA where it nucleates assembly of the body of the 30S subunit. Its function is as follows. With S5 and S12 plays an important role in translational accuracy. The protein is Small ribosomal subunit protein uS4 of Streptococcus suis (strain 98HAH33).